The following is a 344-amino-acid chain: Interferon gamma receptor 1-like (344 aa).

An N-terminal signal peptide occupies residues 1-22 (MSKHAVVQFGVVYALLFPGVFG). Over 23–229 (FVPSPTNVSV…QPTPETDKTG (207 aa)) the chain is Extracellular. The 79-residue stretch at 24-102 (VPSPTNVSVV…TAHDGQEKSE (79 aa)) folds into the Fibronectin type-III domain. Residues Asn29, Asn44, Asn132, and Asn189 are each glycosylated (N-linked (GlcNAc...) asparagine). The helical transmembrane segment at 230 to 250 (IIAALIGGATVVLFIIMGFVW) threads the bilayer. Topologically, residues 251–344 (LLWRKWSNIP…SSDYDRPKFL (94 aa)) are cytoplasmic. The segment at 300–344 (TEEDQSVSARDDTGADPPVVSEEGMAGEDSQGLGCSSDYDRPKFL) is disordered.

It belongs to the type II cytokine receptor family. In terms of tissue distribution, highly expressed in brain. Also detected in spleen, heart, intestine, gill and kidney. In immune cell populations, detected at low levels in monocytes, peripheral blood leukocytes, splenocytes, neutrophils and mature macrophages.

It localises to the cell membrane. In terms of biological role, receptor which shows binding specificity for the cytokine ifng1 (interferon gamma 1). In Carassius auratus (Goldfish), this protein is Interferon gamma receptor 1-like.